A 928-amino-acid chain; its full sequence is MKKANDRQSPPKLLEKKRAKAPEQPTPPIQEEPEPVSNVLQGDDILALAIKKEDLTKQHIPQFEETGEKPVVTQKFIIRKLKPKDSCKRVYHLVAHPANPDATTKPLDYSGPRDSFLSSDQILPHQILGSLQDFKRIAVARGNTQLAKLINIQPCLMTLISAKEEPKPKSPKEEKRPPWAPPLQHNFLKNWRRHITLRKKQQEVLSEHLKKPASELLMNSGEGYRKIQEEREAIDRALPTQHDRKAMNCFWSPLEYLGDEKSGLLMTKKKKQRGLVEPITHIRKPFSIQMETGLPVQKDAWYRYTWDRSLFLIYRRKGLQNIMAELDFSQQDIDGLEVVGHGKPFSSVTVEEPLPLEKSQKSSSEDTVFLDSLTNLSDMVPMPILGPSLLFCGKPACWIRGSNPEDKKNIGIGVRLTFETLEGEKTSSELTVVNNGTVAIWYDWRRRPQQDFFQDLKQNRTQRFYFNNREGVILPGETKHFTFFFKSRNAGIFMESWEFGTHPTLLGGAALQITLHAISLTQDIFMDERKLLESKLAAHEAVTIAQSVLQDLLRGVSTPERAPSPVDAYLTEEDLFHYRNPRLHYQHRVVQNLHQLWQQYTEAKASQEEALNLRTPTVPLLFVEKPPDHSRTLASEYPQLQPHQEMDTLKDPKNSLLPQKTGISTKSMQRKSIMEEILVEEGPDRENTRSPRVLENLPPPKWNLCLEDFRQAVMTFPEELQREDALIQLNKAAMELCQEQKPLQSDLLYQMCLQLWRDVIDSLVSQSLWLRSLLGLPEKETVYLDIPDEGQKSPPVTEVKVTSGKLGKEDRRGGAQEKKQLSARDKEEKKGSKTPSKEDRLNSKKQKAKDDKKVVKSTSRDRLLSEDPPADSSATSQEPIDPLVMEKYTQRLYSEVYGLLDNLVIDMMVLADELGSEKNVEEPLRFCT.

Disordered regions lie at residues 1–38 (MKKA…PVSN) and 164–183 (EEPK…APPL). Residues 164–177 (EEPKPKSPKEEKRP) are compositionally biased toward basic and acidic residues. A Phosphoserine modification is found at S557. The residue at position 558 (T558) is a Phosphothreonine. Residue S564 is modified to Phosphoserine. The interval 786–881 (IPDEGQKSPP…SSATSQEPID (96 aa)) is disordered. Over residues 806-865 (LGKEDRRGGAQEKKQLSARDKEEKKGSKTPSKEDRLNSKKQKAKDDKKVVKSTSRDRLLS) the composition is skewed to basic and acidic residues.

Interacts with MYCBP. In terms of tissue distribution, expressed in brain, retina, testis, heart and lung. Not detected in liver, kidney or intestine. In brain, highly abundant in CNS neurons of the hippocampus and cerebellum. Strongly expressed in cochlea and vestibular sensory epithelia. In both the organ of Corti and the vestibular organ, expression is restricted to hair cells.

The protein localises to the cytoplasm. It is found in the membrane. May play a role in spermatogenesis. May be involved in synaptic processes. The protein is MYCBP-associated protein of Rattus norvegicus (Rat).